Consider the following 184-residue polypeptide: ATP synthase subunit b, chloroplastic (184 aa).

The helical transmembrane segment at 27–49 threads the bilayer; that stretch reads LATNLINLSVVFGVLIFFGKGVL.

The protein belongs to the ATPase B chain family. In terms of assembly, F-type ATPases have 2 components, F(1) - the catalytic core - and F(0) - the membrane proton channel. F(1) has five subunits: alpha(3), beta(3), gamma(1), delta(1), epsilon(1). F(0) has four main subunits: a(1), b(1), b'(1) and c(10-14). The alpha and beta chains form an alternating ring which encloses part of the gamma chain. F(1) is attached to F(0) by a central stalk formed by the gamma and epsilon chains, while a peripheral stalk is formed by the delta, b and b' chains.

The protein localises to the plastid. It localises to the chloroplast thylakoid membrane. In terms of biological role, f(1)F(0) ATP synthase produces ATP from ADP in the presence of a proton or sodium gradient. F-type ATPases consist of two structural domains, F(1) containing the extramembraneous catalytic core and F(0) containing the membrane proton channel, linked together by a central stalk and a peripheral stalk. During catalysis, ATP synthesis in the catalytic domain of F(1) is coupled via a rotary mechanism of the central stalk subunits to proton translocation. Component of the F(0) channel, it forms part of the peripheral stalk, linking F(1) to F(0). This chain is ATP synthase subunit b, chloroplastic, found in Aethionema cordifolium (Lebanon stonecress).